The primary structure comprises 200 residues: Transcriptional repressor NrdR (200 aa).

A zinc finger lies at cysteine 3–cysteine 34. Residues leucine 46–aspartate 136 form the ATP-cone domain.

This sequence belongs to the NrdR family. It depends on Zn(2+) as a cofactor.

Negatively regulates transcription of bacterial ribonucleotide reductase nrd genes and operons by binding to NrdR-boxes. The sequence is that of Transcriptional repressor NrdR from Bifidobacterium animalis subsp. lactis (strain AD011).